The sequence spans 206 residues: Transmembrane emp24 domain-containing protein bai (206 aa).

Positions Met1–Ala20 are cleaved as a signal peptide. Topologically, residues Val21–Arg172 are lumenal. Positions Gln30 to Arg140 constitute a GOLD domain. The helical transmembrane segment at Val173–Leu193 threads the bilayer. Residues Tyr194–Glu206 lie on the Cytoplasmic side of the membrane.

The protein belongs to the EMP24/GP25L family.

It localises to the membrane. In terms of biological role, eca and bai are essential, though not redundant, for dorsoventral patterning of the embryo. Specifically required during early embryogenesis for the activity of maternal tkv, while the zygotic tkv is not affected. This Drosophila ananassae (Fruit fly) protein is Transmembrane emp24 domain-containing protein bai.